Here is a 140-residue protein sequence, read N- to C-terminus: Putative peptidyl-tRNA hydrolase PTRHD1 (140 aa).

The protein belongs to the PTH2 family. PTRHD1 subfamily.

The catalysed reaction is an N-acyl-L-alpha-aminoacyl-tRNA + H2O = an N-acyl-L-amino acid + a tRNA + H(+). Functionally, as a putative peptidyl-tRNA hydrolase, it might be involved in releasing tRNAs from the ribosome during protein synthesis. Some evidence, however, suggests that it lacks peptidyl-tRNA hydrolase activity. The chain is Putative peptidyl-tRNA hydrolase PTRHD1 (Ptrhd1) from Mus musculus (Mouse).